A 127-amino-acid chain; its full sequence is Small ribosomal subunit protein uS11c (127 aa).

The protein belongs to the universal ribosomal protein uS11 family. Part of the 30S ribosomal subunit.

The protein resides in the plastid. It localises to the chloroplast. The sequence is that of Small ribosomal subunit protein uS11c from Heterosigma akashiwo (strain NIES-293 / 8280G21-1).